A 702-amino-acid chain; its full sequence is Putative methyltransferase NSUN7 (702 aa).

Residue C424 is the Nucleophile of the active site. Disordered regions lie at residues 522 to 541 (KSSKREKKKKKSKTSLTKAA), 567 to 593 (ETVTKPSLPQKNTAQVGASSQTRKHKL), and 675 to 702 (PTPSLSRKGEKPKDDTRSSLLRPPRRWL). Residues 523 to 534 (SSKREKKKKKSK) are compositionally biased toward basic residues. The segment covering 567 to 587 (ETVTKPSLPQKNTAQVGASSQ) has biased composition (polar residues). Over residues 681-691 (RKGEKPKDDTR) the composition is skewed to basic and acidic residues.

This sequence belongs to the class I-like SAM-binding methyltransferase superfamily. RsmB/NOP family.

Its function is as follows. May have S-adenosyl-L-methionine-dependent methyl-transferase activity. The protein is Putative methyltransferase NSUN7 (NSUN7) of Macaca fascicularis (Crab-eating macaque).